The sequence spans 108 residues: Succinate dehydrogenase assembly factor 4, mitochondrial (108 aa).

Over residues 33 to 46 (NNNNNNNNNNNNNN) the composition is skewed to low complexity. 2 disordered regions span residues 33-59 (NNNN…KENQ) and 79-108 (NPIT…VSDF). Basic and acidic residues predominate over residues 95-108 (RYNDWERNGRVSDF).

It belongs to the SDHAF4 family. In terms of assembly, interacts with SdhA in its FAD-bound form.

It localises to the mitochondrion matrix. Its function is as follows. Plays an essential role in the assembly of succinate dehydrogenase (SDH), an enzyme complex (also referred to as respiratory complex II) that is a component of both the tricarboxylic acid (TCA) cycle and the mitochondrial electron transport chain, and which couples the oxidation of succinate to fumarate with the reduction of ubiquinone (coenzyme Q) to ubiquinol. Binds to the flavoprotein subunit SdhA in its FAD-bound form, blocking the generation of excess reactive oxygen species (ROS) and facilitating its assembly with the iron-sulfur protein subunit SdhB into the SDH catalytic dimer. The chain is Succinate dehydrogenase assembly factor 4, mitochondrial from Dictyostelium discoideum (Social amoeba).